The sequence spans 558 residues: Oxygen-dependent choline dehydrogenase (558 aa).

8-37 (DYIIIGAGSAGNVLATRLTEDSDVSVLLLE) lines the FAD pocket. The active-site Proton acceptor is the H475.

The protein belongs to the GMC oxidoreductase family. Requires FAD as cofactor.

The enzyme catalyses choline + A = betaine aldehyde + AH2. It catalyses the reaction betaine aldehyde + NAD(+) + H2O = glycine betaine + NADH + 2 H(+). Its pathway is amine and polyamine biosynthesis; betaine biosynthesis via choline pathway; betaine aldehyde from choline (cytochrome c reductase route): step 1/1. Its function is as follows. Involved in the biosynthesis of the osmoprotectant glycine betaine. Catalyzes the oxidation of choline to betaine aldehyde and betaine aldehyde to glycine betaine at the same rate. This chain is Oxygen-dependent choline dehydrogenase, found in Chromohalobacter salexigens (strain ATCC BAA-138 / DSM 3043 / CIP 106854 / NCIMB 13768 / 1H11).